Here is a 317-residue protein sequence, read N- to C-terminus: Zinc transporter ZIP3 (317 aa).

The Extracellular portion of the chain corresponds to 1-3; it reads MSQ. The chain crosses the membrane as a helical span at residues 4-24; sequence LLVAKVLCMVGVFFFMLLGSL. Topologically, residues 25–42 are cytoplasmic; sequence LPVKVIEADFEKAHRSKK. Residues 43 to 63 traverse the membrane as a helical segment; the sequence is VLSLCNTFGGGVFLATCFNAL. At 64-85 the chain is on the extracellular side; it reads LPAVRDKLQQVLSLGHISTDYP. The helical transmembrane segment at 86–106 threads the bilayer; sequence LAETLMMVGFFLTVFVEQLVL. Topologically, residues 107-172 are cytoplasmic; it reads TFRRERPPFI…RELGRPGPLR (66 aa). Residues S125 and S129 each carry the phosphoserine modification. The chain crosses the membrane as a helical span at residues 173 to 193; it reads LLSLVFALSAHSVFEGLALGL. Residues 194 to 199 lie on the Extracellular side of the membrane; that stretch reads QEEGER. A helical membrane pass occupies residues 200–220; that stretch reads VVSLFVGVAVHETLVAVALGI. The Cytoplasmic segment spans residues 221–232; sequence SMARSAVPLRDA. A helical membrane pass occupies residues 233–253; it reads AKLAVTVSAMIPVGIGLGLGI. At 254–265 the chain is on the extracellular side; that stretch reads ESARSVASSVAS. A helical transmembrane segment spans residues 266–286; it reads ALLQGLAGGTFLFVTFLEILA. The Cytoplasmic segment spans residues 287–294; the sequence is KELEERSE. Residues 295 to 315 traverse the membrane as a helical segment; that stretch reads QLLKVLFLVLGYAVLAGMVFL. The Extracellular portion of the chain corresponds to 316-317; that stretch reads KW.

It belongs to the ZIP transporter (TC 2.A.5) family.

The protein resides in the cell membrane. It is found in the apical cell membrane. It carries out the reaction Zn(2+)(in) = Zn(2+)(out). In terms of biological role, transporter for the divalent cation Zn(2+). Mediates the influx of Zn(2+) into cells from extracellular space. Controls Zn(2+) accumulation into dentate gyrus granule cells in the hippocampus. Mediates Zn(2+) reuptake from the secreted milk within the alveolar lumen. This is Zinc transporter ZIP3 (Slc39a3) from Rattus norvegicus (Rat).